Consider the following 335-residue polypeptide: MINSNNQVLSEIRFDWNKKEILEILNMPLIDLMWESQIVHRKFNSYNIQLASLFSVKTGGCEENCSYCSQSIYSASEIKSHPQFQVEEVLARAKIAKNEGADRFCMGWAWREIRDGKSFNAMLEMVSGVRDLGMEACVTAGMLTEEQASRLADAGLTAYNHNLDTSPEHYKNIITTRTYQDRLDTIKRVRNAGINVCCGGIIGLGETNGDRASLLEVLSNMNPHPESVPINSLVAIEGTGLEDNQEIDSIEMIRMIATARILMPKSKIRLSAGREKLSKEAQILCFQCGANSIFYGDELLTTSNPSFQSDRKLLKEVGVSFNKDFETCEKTLSSL.

Residues 46–274 (YNIQLASLFS…KSKIRLSAGR (229 aa)) form the Radical SAM core domain. The [4Fe-4S] cluster site is built by cysteine 61, cysteine 65, and cysteine 68. [2Fe-2S] cluster contacts are provided by cysteine 105, cysteine 137, cysteine 197, and arginine 269.

Belongs to the radical SAM superfamily. Biotin synthase family. In terms of assembly, homodimer. Requires [4Fe-4S] cluster as cofactor. The cofactor is [2Fe-2S] cluster.

It catalyses the reaction (4R,5S)-dethiobiotin + (sulfur carrier)-SH + 2 reduced [2Fe-2S]-[ferredoxin] + 2 S-adenosyl-L-methionine = (sulfur carrier)-H + biotin + 2 5'-deoxyadenosine + 2 L-methionine + 2 oxidized [2Fe-2S]-[ferredoxin]. It participates in cofactor biosynthesis; biotin biosynthesis; biotin from 7,8-diaminononanoate: step 2/2. In terms of biological role, catalyzes the conversion of dethiobiotin (DTB) to biotin by the insertion of a sulfur atom into dethiobiotin via a radical-based mechanism. In Prochlorococcus marinus (strain AS9601), this protein is Biotin synthase.